Consider the following 71-residue polypeptide: Immune-induced peptide 18 (71 aa).

A signal peptide spans 1-24 (MKLIALCCLLLLGLLGFLAAPGVA). The propeptide occupies 25-26 (SP). The disordered stretch occupies residues 26 to 71 (PSRHTGPGNGSGSGAGSGNPFRSPSSQQRPLYYDAPIGKPSKTMYA). Residues 32 to 42 (PGNGSGSGAGS) show a composition bias toward gly residues.

In terms of tissue distribution, hemolymph (at protein level).

The protein localises to the secreted. This is Immune-induced peptide 18 (IM18) from Drosophila melanogaster (Fruit fly).